The sequence spans 164 residues: Succinate dehydrogenase assembly factor 2, mitochondrial (164 aa).

Belongs to the SDHAF2 family. As to quaternary structure, interacts with the flavoprotein subunit within the SDH catalytic dimer.

Its subcellular location is the mitochondrion matrix. In terms of biological role, plays an essential role in the assembly of succinate dehydrogenase (SDH), an enzyme complex (also referred to as respiratory complex II) that is a component of both the tricarboxylic acid (TCA) cycle and the mitochondrial electron transport chain, and which couples the oxidation of succinate to fumarate with the reduction of ubiquinone (coenzyme Q) to ubiquinol. Required for flavinylation (covalent attachment of FAD) of the flavoprotein subunit of the SDH catalytic dimer. The polypeptide is Succinate dehydrogenase assembly factor 2, mitochondrial (Lodderomyces elongisporus (strain ATCC 11503 / CBS 2605 / JCM 1781 / NBRC 1676 / NRRL YB-4239) (Yeast)).